Reading from the N-terminus, the 60-residue chain is Toxin FS-2 (60 aa).

Intrachain disulfides connect C3-C22, C17-C39, C41-C52, and C53-C58. Residues 41–48 are important for binding to L-type calcium channels; it reads CPTAMWPY.

Belongs to the three-finger toxin family. Short-chain subfamily. L-type calcium blocker sub-subfamily. Expressed by the venom gland.

It localises to the secreted. Functionally, specific blocker of the voltage-dependent L-type calcium channel (Cav1/CACNA1). Inhibits cardiac contractions. The protein is Toxin FS-2 of Dendroaspis polylepis polylepis (Black mamba).